Here is a 346-residue protein sequence, read N- to C-terminus: tRNA pseudouridine synthase D (346 aa).

Asp-83 serves as the catalytic Nucleophile. The 147-residue stretch at 159–305 folds into the TRUD domain; that stretch reads GVPNYFGEQR…LKQERRALRV (147 aa).

The protein belongs to the pseudouridine synthase TruD family.

The enzyme catalyses uridine(13) in tRNA = pseudouridine(13) in tRNA. Functionally, responsible for synthesis of pseudouridine from uracil-13 in transfer RNAs. This Hydrogenovibrio crunogenus (strain DSM 25203 / XCL-2) (Thiomicrospira crunogena) protein is tRNA pseudouridine synthase D.